Reading from the N-terminus, the 396-residue chain is MQSKTLYLKATALLGGCTVFAATALAVTSTATRPQLSSADARTYTIAKYLASFGTIGSLTTDNWDPTGGVGAVSGFRANYAVAADGTAQYKTVQAAIDAAVNAGGVARRYISVKAGIYNELVCVPESAPPITLYGLDANAGNTQIVYNNANPTPASGAKTNPCMGTSSNATVGTLRSATAMVRASDFHARNLTFKNSYVEGTYADNNQSAVALAVRGDKAILENVSVIGNQDTLFVGATSTTTVIRAYFKNSFIQGDTDFIFGAGTAVFHGCTIQYTAARLGAKAASYIFAPSTAPGNPYGFLAINSTFNATGNPPNNSLHLGRAWDQSVSGTSAYINGSSPNGQVVIRDSSLGALIRLADPWGPSTAGRPYCSANCAYSANRFFEYNNTGAGSGN.

The signal sequence occupies residues 1-21; the sequence is MQSKTLYLKATALLGGCTVFA. Position 174 (threonine 174) interacts with substrate. Residue aspartate 232 is the Proton donor of the active site. Aspartate 259 acts as the Nucleophile in catalysis. 2 residues coordinate substrate: arginine 324 and tryptophan 326.

It belongs to the pectinesterase family.

The protein resides in the secreted. The enzyme catalyses [(1-&gt;4)-alpha-D-galacturonosyl methyl ester](n) + n H2O = [(1-&gt;4)-alpha-D-galacturonosyl](n) + n methanol + n H(+). The protein operates within glycan metabolism; pectin degradation; 2-dehydro-3-deoxy-D-gluconate from pectin: step 1/5. Functionally, involved in maceration and soft-rotting of plant tissue. The sequence is that of Pectinesterase (pme) from Ralstonia nicotianae (strain ATCC BAA-1114 / GMI1000) (Ralstonia solanacearum).